The sequence spans 101 residues: Small ribosomal subunit protein uS14 (101 aa).

It belongs to the universal ribosomal protein uS14 family. As to quaternary structure, part of the 30S ribosomal subunit. Contacts proteins S3 and S10.

Functionally, binds 16S rRNA, required for the assembly of 30S particles and may also be responsible for determining the conformation of the 16S rRNA at the A site. In Orientia tsutsugamushi (strain Boryong) (Rickettsia tsutsugamushi), this protein is Small ribosomal subunit protein uS14.